The following is a 130-amino-acid chain: Small ribosomal subunit protein uS9 (130 aa).

It belongs to the universal ribosomal protein uS9 family.

In Clostridium beijerinckii (strain ATCC 51743 / NCIMB 8052) (Clostridium acetobutylicum), this protein is Small ribosomal subunit protein uS9.